The following is a 586-amino-acid chain: Arginine--tRNA ligase (586 aa).

A 'HIGH' region motif is present at residues 131-141; it reads ANPTGPLHVGH.

Belongs to the class-I aminoacyl-tRNA synthetase family. Monomer.

It localises to the cytoplasm. The enzyme catalyses tRNA(Arg) + L-arginine + ATP = L-arginyl-tRNA(Arg) + AMP + diphosphate. The sequence is that of Arginine--tRNA ligase from Nitrosomonas eutropha (strain DSM 101675 / C91 / Nm57).